The sequence spans 190 residues: uncharacterized protein (190 aa).

This is an uncharacterized protein from Archaeoglobus fulgidus (strain ATCC 49558 / DSM 4304 / JCM 9628 / NBRC 100126 / VC-16).